The sequence spans 355 residues: WAT1-related protein At3g28130 (355 aa).

10 helical membrane-spanning segments follow: residues 11-31 (AVLL…NTLF), 42-62 (YTFL…SHIF), 80-100 (IGVL…GIEY), 104-124 (TLAS…AIIF), 136-156 (SVAK…VVLY), 186-206 (WIIG…AFIL), 218-238 (FTVS…IGIV), 244-264 (PSIW…GGIF), 290-310 (LSIL…FYLG), and 311-331 (SLVG…GKAK). The region spanning 29–154 (TLFKAATSKG…VSLVGALVVV (126 aa)) is the EamA domain.

It belongs to the drug/metabolite transporter (DMT) superfamily. Plant drug/metabolite exporter (P-DME) (TC 2.A.7.4) family.

The protein resides in the membrane. In Arabidopsis thaliana (Mouse-ear cress), this protein is WAT1-related protein At3g28130.